Consider the following 546-residue polypeptide: Tyrosine-protein kinase yes (546 aa).

The segment covering 1-18 has biased composition (basic and acidic residues); sequence MGCVKSKEDKGPTQKYRP. A disordered region spans residues 1–58; it reads MGCVKSKEDKGPTQKYRPDPTNPTPGSHMGLYGPDPTQMGQSPALKGPTNNYNSRSSG. Gly2 is lipidated: N-myristoyl glycine. Cys3 carries the S-palmitoyl cysteine; in membrane form lipid modification. Residues 48-58 show a composition bias toward polar residues; it reads PTNNYNSRSSG. The region spanning 94 to 155 is the SH3 domain; the sequence is GGVTFFVALY…PSNYVAPADS (62 aa). Residues 161 to 258 form the SH2 domain; it reads WYFGKMGRKD…GLCYRLTTVC (98 aa). One can recognise a Protein kinase domain in the interval 280–533; it reads LRLELKLGQG…YIQSFLEDYF (254 aa). ATP-binding positions include 286 to 294 and Lys308; that span reads LGQGCFGEV. Catalysis depends on Asp399, which acts as the Proton acceptor. Position 429 is a phosphotyrosine; by autocatalysis (Tyr429). At Tyr540 the chain carries Phosphotyrosine; by CSK.

The protein belongs to the protein kinase superfamily. Tyr protein kinase family. SRC subfamily. In terms of processing, autophosphorylation at Tyr-429 maintains enzyme activity. Post-translationally, palmitoylation at Cys-3 promotes membrane localization. In terms of tissue distribution, widely expressed.

It localises to the cell membrane. Its subcellular location is the cytoplasm. It is found in the cytoskeleton. The protein resides in the microtubule organizing center. The protein localises to the centrosome. It localises to the cytosol. Its subcellular location is the cell junction. The catalysed reaction is L-tyrosyl-[protein] + ATP = O-phospho-L-tyrosyl-[protein] + ADP + H(+). Functionally, non-receptor protein tyrosine kinase that is involved in the regulation of cell growth and survival, apoptosis, cell-cell adhesion, cytoskeleton remodeling, differentiation, G2/M progression and cytokinesis. Required for convergent extension cell movements during gastrulation, acting with fyna via rhoa. May be required for epiboly to occur, possibly through its effects in calcium signaling. During embryonic development, phosphorylates ptk2.1/fak. In Danio rerio (Zebrafish), this protein is Tyrosine-protein kinase yes (yes1).